A 447-amino-acid polypeptide reads, in one-letter code: Pyruvate kinase (447 aa).

Residue R33 participates in substrate binding. The K(+) site is built by N35, S37, and D61. Position 35–38 (35–38) interacts with ATP; sequence NMSH. Position 68 (R68) interacts with ATP. E203 contacts Mg(2+). Residues G226, D227, and T259 each coordinate substrate. A Mg(2+)-binding site is contributed by D227.

Belongs to the pyruvate kinase family. Homotetramer. Mg(2+) is required as a cofactor. K(+) serves as cofactor.

The enzyme catalyses pyruvate + ATP = phosphoenolpyruvate + ADP + H(+). It functions in the pathway carbohydrate degradation; glycolysis; pyruvate from D-glyceraldehyde 3-phosphate: step 5/5. The polypeptide is Pyruvate kinase (Methanocaldococcus jannaschii (strain ATCC 43067 / DSM 2661 / JAL-1 / JCM 10045 / NBRC 100440) (Methanococcus jannaschii)).